Consider the following 715-residue polypeptide: Putative membrane protein IgaA homolog (715 aa).

The next 5 membrane-spanning stretches (helical) occupy residues 2 to 22 (STIV…GLLW), 214 to 234 (EACA…GPTV), 235 to 255 (TLPW…WYLF), 349 to 369 (NLTL…YVPL), and 663 to 683 (ATSL…VLLI).

It belongs to the IgaA family.

It is found in the cell inner membrane. The chain is Putative membrane protein IgaA homolog from Yersinia pestis.